Reading from the N-terminus, the 243-residue chain is Large ribosomal subunit protein uL2 (243 aa).

Disordered regions lie at residues 1–23 and 204–243; these read MGKR…PSHR and PFGG…GGRR. Basic residues predominate over residues 228–243; that stretch reads KVGHIAARKTGRGGRR.

Belongs to the universal ribosomal protein uL2 family. As to quaternary structure, part of the 50S ribosomal subunit. Forms a bridge to the 30S subunit in the 70S ribosome.

Its function is as follows. One of the primary rRNA binding proteins. Required for association of the 30S and 50S subunits to form the 70S ribosome, for tRNA binding and peptide bond formation. It has been suggested to have peptidyltransferase activity; this is somewhat controversial. Makes several contacts with the 16S rRNA in the 70S ribosome. This Methanopyrus kandleri (strain AV19 / DSM 6324 / JCM 9639 / NBRC 100938) protein is Large ribosomal subunit protein uL2.